The chain runs to 93 residues: Parbolysin P3 (93 aa).

3 disulfides stabilise this stretch: C16/C37, C22/C33, and C47/C60.

It belongs to the worm cytolysin family. In terms of tissue distribution, localized within the skin and proboscis and are most readily isolated from body mucus secretions.

Its subcellular location is the secreted. Cytolysin that shows hemolytic activity (on bovine erythrocytes, HC(50)=5.75 mg/ml). This hemolytic activity is completely inhibited by small unilamelar vesicles composed of PC/PG, PC/PI and PC/PS in 1:1 molar ratios (with at least 100 mg/ml concentration). The polypeptide is Parbolysin P3 (Parborlasia corrugatus (Antarctic nemertean worm)).